We begin with the raw amino-acid sequence, 241 residues long: Spiralin (241 aa).

A signal peptide spans 1 to 23; sequence MKKLLSILAVFGVSAVGTTSVVA. Cysteine 24 carries the N-palmitoyl cysteine lipid modification. A lipid anchor (S-diacylglycerol cysteine) is attached at cysteine 24.

The protein belongs to the spiralin family. As to quaternary structure, seems to occur as dimer, tetramers, and large oligomers of identical chains. Palmitate and stearate are the major lipid components.

It localises to the cell membrane. Functionally, major membrane protein of spiroplasma. The chain is Spiralin (spi) from Spiroplasma citri.